The sequence spans 574 residues: Type II methyltransferase M.PaeR7I (574 aa).

It belongs to the N(4)/N(6)-methyltransferase family. Monomer.

The enzyme catalyses a 2'-deoxyadenosine in DNA + S-adenosyl-L-methionine = an N(6)-methyl-2'-deoxyadenosine in DNA + S-adenosyl-L-homocysteine + H(+). Its function is as follows. A gamma subtype methylase, recognizes the double-stranded sequence 5'-CTCGAG-3', methylates A-5 on both strands, and protects the DNA from cleavage by the PaeR7I endonuclease. In Pseudomonas aeruginosa, this protein is Type II methyltransferase M.PaeR7I (paeR7IM).